The following is a 299-amino-acid chain: Glycine--tRNA ligase alpha subunit (299 aa).

The protein belongs to the class-II aminoacyl-tRNA synthetase family. Tetramer of two alpha and two beta subunits.

The protein localises to the cytoplasm. The catalysed reaction is tRNA(Gly) + glycine + ATP = glycyl-tRNA(Gly) + AMP + diphosphate. The sequence is that of Glycine--tRNA ligase alpha subunit from Dichelobacter nodosus (strain VCS1703A).